The sequence spans 487 residues: Serine/threonine-protein kinase 4 (487 aa).

M1 carries the post-translational modification N-acetylmethionine. T3 is subject to Phosphothreonine. The 252-residue stretch at F30 to V281 folds into the Protein kinase domain. ATP-binding positions include L36–V44 and K59. Catalysis depends on D149, which acts as the Proton acceptor. A Phosphothreonine; by autocatalysis modification is found at T183. A Phosphoserine modification is found at S265. Positions L290–R310 form a coiled coil. Basic and acidic residues predominate over residues K303–V312. Residues K303–R332 form a disordered region. The span at D313–D326 shows a compositional bias: acidic residues. S320 is subject to Phosphoserine. Phosphothreonine occurs at positions 340 and 367. T387 bears the Phosphothreonine; by PKB/AKT1 mark. S410 and S414 each carry phosphoserine. At Y433 the chain carries Phosphotyrosine. Positions Y433–K480 constitute an SARAH domain.

Belongs to the protein kinase superfamily. STE Ser/Thr protein kinase family. STE20 subfamily. As to quaternary structure, homodimer; mediated via the coiled-coil region. Interacts with NORE1, which inhibits autoactivation. Interacts with and stabilizes SAV1. Interacts with RASSF1. Interacts with FOXO3. Interacts with RASSF2 (via SARAH domain). Interacts with AR, PKB/AKT1, TNNI3 and SIRT1. Interacts with DLG5 (via PDZ domain 3). Interacts with MARK3 and SCRIB in the presence of DLG5. The cofactor is Mg(2+). Post-translationally, autophosphorylated on serine and threonine residues. Phosphorylation at Thr-387 by PKB/AKT1, leads to inhibition of its: kinase activity, nuclear translocation and autophosphorylation at Thr-183. It also diminishes its cleavage by caspases and its ability to phosphorylate FOXO3. In terms of processing, proteolytically cleaved by caspase-3 during apoptosis at Asp-326 and Asp-349 resulting in a 37 kDa or a 39 kDa subunit respectively. The 39 kDa subunit is further cleaved into the 37 kDa form. Proteolytic cleavage results in kinase activation and nuclear translocation of the truncated form (MST1/N). It is less likely that cleavage at Asp-349 is a prerequisite for activation as this site is not conserved in the murine ortholog.

It is found in the cytoplasm. It localises to the nucleus. It carries out the reaction L-seryl-[protein] + ATP = O-phospho-L-seryl-[protein] + ADP + H(+). The catalysed reaction is L-threonyl-[protein] + ATP = O-phospho-L-threonyl-[protein] + ADP + H(+). Its activity is regulated as follows. Inhibited by the C-terminal non-catalytic region. Activated by caspase-cleavage. Full activation also requires homodimerization and autophosphorylation of Thr-183. Activated by RASSF1 which acts by preventing its dephosphorylation. Functionally, stress-activated, pro-apoptotic kinase which, following caspase-cleavage, enters the nucleus and induces chromatin condensation followed by internucleosomal DNA fragmentation. Key component of the Hippo signaling pathway which plays a pivotal role in organ size control and tumor suppression by restricting proliferation and promoting apoptosis. The core of this pathway is composed of a kinase cascade wherein STK3/MST2 and STK4/MST1, in complex with its regulatory protein SAV1, phosphorylates and activates LATS1/2 in complex with its regulatory protein MOB1, which in turn phosphorylates and inactivates YAP1 oncoprotein and WWTR1/TAZ. Phosphorylation of YAP1 by LATS2 inhibits its translocation into the nucleus to regulate cellular genes important for cell proliferation, cell death, and cell migration. STK3/MST2 and STK4/MST1 are required to repress proliferation of mature hepatocytes, to prevent activation of facultative adult liver stem cells (oval cells), and to inhibit tumor formation. Phosphorylates 'Ser-14' of histone H2B (H2BS14ph) during apoptosis. Phosphorylates FOXO3 upon oxidative stress, which results in its nuclear translocation and cell death initiation. Phosphorylates MOBKL1A, MOBKL1B and RASSF2. Phosphorylates TNNI3 (cardiac Tn-I) and alters its binding affinity to TNNC1 (cardiac Tn-C) and TNNT2 (cardiac Tn-T). Phosphorylates FOXO1 on 'Ser-212' and regulates its activation and stimulates transcription of PMAIP1 in a FOXO1-dependent manner. Phosphorylates SIRT1 and inhibits SIRT1-mediated p53/TP53 deacetylation, thereby promoting p53/TP53 dependent transcription and apoptosis upon DNA damage. Acts as an inhibitor of PKB/AKT1. Phosphorylates AR on 'Ser-650' and suppresses its activity by intersecting with PKB/AKT1 signaling and antagonizing formation of AR-chromatin complexes. The chain is Serine/threonine-protein kinase 4 (STK4) from Papio anubis (Olive baboon).